Reading from the N-terminus, the 887-residue chain is Bifunctional uridylyltransferase/uridylyl-removing enzyme (887 aa).

The tract at residues 1-337 (MINTSPLLNY…RLPNYERKIE (337 aa)) is uridylyltransferase. Positions 339–699 (VNDHFKIVDN…AHRKAAQDAV (361 aa)) are uridylyl-removing. The 123-residue stretch at 457-579 (VDAHTLLLLR…LGDMEHLDYL (123 aa)) folds into the HD domain. ACT domains follow at residues 700–782 (QIFI…LMQR) and 809–887 (MVEI…ICQH).

Belongs to the GlnD family. Requires Mg(2+) as cofactor.

It catalyses the reaction [protein-PII]-L-tyrosine + UTP = [protein-PII]-uridylyl-L-tyrosine + diphosphate. The catalysed reaction is [protein-PII]-uridylyl-L-tyrosine + H2O = [protein-PII]-L-tyrosine + UMP + H(+). Uridylyltransferase (UTase) activity is inhibited by glutamine, while glutamine activates uridylyl-removing (UR) activity. Its function is as follows. Modifies, by uridylylation and deuridylylation, the PII regulatory proteins (GlnB and homologs), in response to the nitrogen status of the cell that GlnD senses through the glutamine level. Under low glutamine levels, catalyzes the conversion of the PII proteins and UTP to PII-UMP and PPi, while under higher glutamine levels, GlnD hydrolyzes PII-UMP to PII and UMP (deuridylylation). Thus, controls uridylylation state and activity of the PII proteins, and plays an important role in the regulation of nitrogen assimilation and metabolism. This chain is Bifunctional uridylyltransferase/uridylyl-removing enzyme, found in Acinetobacter baumannii (strain ATCC 17978 / DSM 105126 / CIP 53.77 / LMG 1025 / NCDC KC755 / 5377).